We begin with the raw amino-acid sequence, 310 residues long: Pyrimidine-specific ribonucleoside hydrolase RihA (310 aa).

Histidine 240 is an active-site residue.

This sequence belongs to the IUNH family. RihA subfamily.

Its function is as follows. Hydrolyzes cytidine or uridine to ribose and cytosine or uracil, respectively. This is Pyrimidine-specific ribonucleoside hydrolase RihA from Photobacterium profundum (strain SS9).